The primary structure comprises 82 residues: Lectin-D2 (82 aa).

Chitin-binding type-1 domains lie at 1–42 (APEC…QCDY) and 43–82 (WRCG…SQCD). Cystine bridges form between cysteine 4-cysteine 19, cysteine 13-cysteine 25, cysteine 18-cysteine 32, and cysteine 36-cysteine 40. Serine 20, tryptophan 22, tyrosine 24, and tyrosine 31 together coordinate a carbohydrate. Residue tryptophan 43 participates in a carbohydrate binding. Intrachain disulfides connect cysteine 45-cysteine 60, cysteine 54-cysteine 66, cysteine 59-cysteine 73, and cysteine 77-cysteine 81. Residues serine 61, tyrosine 63, tryptophan 65, and histidine 72 each coordinate a carbohydrate.

As to quaternary structure, monomer.

Its function is as follows. N-acetyl-D-glucosamine binding lectin. Shows no hemagglutinating activity towards rabbit erythrocytes and weak activity towards trypsin-treated erythrocytes. Has mitogenic activity towards human peripheral blood lymphocytes (HPBL). The chain is Lectin-D2 from Phytolacca americana (American pokeweed).